Reading from the N-terminus, the 269-residue chain is Phosphonoacetaldehyde hydrolase (269 aa).

The Nucleophile role is filled by D10. Mg(2+) contacts are provided by D10 and A12. K52 (schiff-base intermediate with substrate) is an active-site residue. D186 is a Mg(2+) binding site.

The protein belongs to the HAD-like hydrolase superfamily. PhnX family. As to quaternary structure, homodimer. It depends on Mg(2+) as a cofactor.

The enzyme catalyses phosphonoacetaldehyde + H2O = acetaldehyde + phosphate + H(+). Involved in phosphonate degradation. This Klebsiella pneumoniae subsp. pneumoniae (strain ATCC 700721 / MGH 78578) protein is Phosphonoacetaldehyde hydrolase.